A 312-amino-acid polypeptide reads, in one-letter code: DNA-directed RNA polymerase subunit alpha (312 aa).

An alpha N-terminal domain (alpha-NTD) region spans residues 1 to 229; that stretch reads MLQYQIDRID…ELFQPLATVT (229 aa). The segment at 240–312 is alpha C-terminal domain (alpha-CTD); sequence PSPEAQIPLE…ISIPQSRTSV (73 aa).

Belongs to the RNA polymerase alpha chain family. In cyanobacteria the RNAP catalytic core is composed of 2 alpha, 1 beta, 1 beta', 1 gamma and 1 omega subunit. When a sigma factor is associated with the core the holoenzyme is formed, which can initiate transcription.

It catalyses the reaction RNA(n) + a ribonucleoside 5'-triphosphate = RNA(n+1) + diphosphate. Functionally, DNA-dependent RNA polymerase catalyzes the transcription of DNA into RNA using the four ribonucleoside triphosphates as substrates. This is DNA-directed RNA polymerase subunit alpha from Prochlorococcus marinus (strain AS9601).